The primary structure comprises 214 residues: Orotate phosphoribosyltransferase (214 aa).

5-phospho-alpha-D-ribose 1-diphosphate contacts are provided by residues arginine 125, lysine 126, lysine 129, histidine 131, and 151 to 159 (EDTSTTGNS). Orotate contacts are provided by threonine 155 and arginine 183.

The protein belongs to the purine/pyrimidine phosphoribosyltransferase family. PyrE subfamily. In terms of assembly, homodimer. Requires Mg(2+) as cofactor.

The enzyme catalyses orotidine 5'-phosphate + diphosphate = orotate + 5-phospho-alpha-D-ribose 1-diphosphate. The protein operates within pyrimidine metabolism; UMP biosynthesis via de novo pathway; UMP from orotate: step 1/2. Catalyzes the transfer of a ribosyl phosphate group from 5-phosphoribose 1-diphosphate to orotate, leading to the formation of orotidine monophosphate (OMP). The chain is Orotate phosphoribosyltransferase from Tropheryma whipplei (strain Twist) (Whipple's bacillus).